We begin with the raw amino-acid sequence, 121 residues long: Small ribosomal subunit protein uS13 (121 aa).

The segment at 95-121 (GLPVRGQKTKTNARTRKGKRKTVGAKS) is disordered.

This sequence belongs to the universal ribosomal protein uS13 family. Part of the 30S ribosomal subunit. Forms a loose heterodimer with protein S19. Forms two bridges to the 50S subunit in the 70S ribosome.

In terms of biological role, located at the top of the head of the 30S subunit, it contacts several helices of the 16S rRNA. In the 70S ribosome it contacts the 23S rRNA (bridge B1a) and protein L5 of the 50S subunit (bridge B1b), connecting the 2 subunits; these bridges are implicated in subunit movement. Contacts the tRNAs in the A and P-sites. This Campylobacter jejuni subsp. jejuni serotype O:6 (strain 81116 / NCTC 11828) protein is Small ribosomal subunit protein uS13.